The primary structure comprises 330 residues: D-alanine--D-alanine ligase (330 aa).

One can recognise an ATP-grasp domain in the interval 122–323 (NRFLSGFGIR…MKEVLCTIIR (202 aa)). 151 to 206 (IARMGLPLFVKPNVGGSSIATTKVVEAAQLLPAIEQAFSEGEEVMIERLICGTEVT) contributes to the ATP binding site. Positions 277, 290, and 292 each coordinate Mg(2+).

This sequence belongs to the D-alanine--D-alanine ligase family. Mg(2+) is required as a cofactor. Mn(2+) serves as cofactor.

It localises to the cytoplasm. The catalysed reaction is 2 D-alanine + ATP = D-alanyl-D-alanine + ADP + phosphate + H(+). The protein operates within cell wall biogenesis; peptidoglycan biosynthesis. Cell wall formation. The polypeptide is D-alanine--D-alanine ligase (Porphyromonas gingivalis (strain ATCC BAA-308 / W83)).